The following is a 292-amino-acid chain: Protease HtpX (292 aa).

2 helical membrane-spanning segments follow: residues 4-24 (IVLFLLTNLAVMLIFSLILFL) and 32-52 (IYGLLIMSGLFGFSGSILSLI). A Zn(2+)-binding site is contributed by H139. E140 is a catalytic residue. H143 serves as a coordination point for Zn(2+). Transmembrane regions (helical) follow at residues 147 to 167 (GDMITMTLVQGVVNTFVIFIS) and 193 to 213 (FVYFLVSTFLELIFGILASII). E222 contacts Zn(2+).

Belongs to the peptidase M48B family. It depends on Zn(2+) as a cofactor.

The protein localises to the cell membrane. In Buchnera aphidicola subsp. Acyrthosiphon pisum (strain 5A), this protein is Protease HtpX.